Consider the following 169-residue polypeptide: Gastrula zinc finger protein XlCGF62.1 (169 aa).

6 consecutive C2H2-type zinc fingers follow at residues 6-28 (FICT…IRTH), 34-56 (FICT…YKTH), 62-84 (FICT…HRSH), 90-113 (FTCT…QAIH), 119-141 (FICT…KRTH), and 147-169 (FVCT…KRTH).

Belongs to the krueppel C2H2-type zinc-finger protein family.

The protein resides in the nucleus. Its function is as follows. May be involved in transcriptional regulation. The sequence is that of Gastrula zinc finger protein XlCGF62.1 from Xenopus laevis (African clawed frog).